The chain runs to 313 residues: Ribosomal RNA small subunit methyltransferase H (313 aa).

S-adenosyl-L-methionine contacts are provided by residues 31 to 33 (GGH), D51, F77, D95, and Q102.

This sequence belongs to the methyltransferase superfamily. RsmH family.

The protein resides in the cytoplasm. The enzyme catalyses cytidine(1402) in 16S rRNA + S-adenosyl-L-methionine = N(4)-methylcytidine(1402) in 16S rRNA + S-adenosyl-L-homocysteine + H(+). Its function is as follows. Specifically methylates the N4 position of cytidine in position 1402 (C1402) of 16S rRNA. The sequence is that of Ribosomal RNA small subunit methyltransferase H from Xylella fastidiosa (strain M12).